The sequence spans 118 residues: Small ribosomal subunit protein uS13 (118 aa).

The disordered stretch occupies residues 99–118; it reads GQRTRTNARTRKGPRKAIKK.

It belongs to the universal ribosomal protein uS13 family. As to quaternary structure, part of the 30S ribosomal subunit. Forms a loose heterodimer with protein S19. Forms two bridges to the 50S subunit in the 70S ribosome.

Functionally, located at the top of the head of the 30S subunit, it contacts several helices of the 16S rRNA. In the 70S ribosome it contacts the 23S rRNA (bridge B1a) and protein L5 of the 50S subunit (bridge B1b), connecting the 2 subunits; these bridges are implicated in subunit movement. Contacts the tRNAs in the A and P-sites. This Xylella fastidiosa (strain M12) protein is Small ribosomal subunit protein uS13.